The primary structure comprises 363 residues: Chorismate synthase (363 aa).

Residues 44-63 (DLDRRKPGTSRHTTQRQEPD) are disordered. The NADP(+) site is built by Arg48 and Arg54. FMN contacts are provided by residues 125-127 (RSS), 237-238 (NA), Gly277, 292-296 (KATSS), and Arg318.

It belongs to the chorismate synthase family. In terms of assembly, homotetramer. FMNH2 serves as cofactor.

The catalysed reaction is 5-O-(1-carboxyvinyl)-3-phosphoshikimate = chorismate + phosphate. Its pathway is metabolic intermediate biosynthesis; chorismate biosynthesis; chorismate from D-erythrose 4-phosphate and phosphoenolpyruvate: step 7/7. Functionally, catalyzes the anti-1,4-elimination of the C-3 phosphate and the C-6 proR hydrogen from 5-enolpyruvylshikimate-3-phosphate (EPSP) to yield chorismate, which is the branch point compound that serves as the starting substrate for the three terminal pathways of aromatic amino acid biosynthesis. This reaction introduces a second double bond into the aromatic ring system. This is Chorismate synthase from Pseudomonas fluorescens (strain SBW25).